Reading from the N-terminus, the 196-residue chain is Glycerol-3-phosphate acyltransferase (196 aa).

Transmembrane regions (helical) follow at residues 3–23, 78–98, 112–132, and 154–174; these read NAVF…ILVS, VGVV…PVFY, VLLA…IVVF, and WLLL…LLLI.

The protein belongs to the PlsY family. In terms of assembly, probably interacts with PlsX.

It localises to the cell inner membrane. It catalyses the reaction an acyl phosphate + sn-glycerol 3-phosphate = a 1-acyl-sn-glycero-3-phosphate + phosphate. It functions in the pathway lipid metabolism; phospholipid metabolism. Functionally, catalyzes the transfer of an acyl group from acyl-phosphate (acyl-PO(4)) to glycerol-3-phosphate (G3P) to form lysophosphatidic acid (LPA). This enzyme utilizes acyl-phosphate as fatty acyl donor, but not acyl-CoA or acyl-ACP. The polypeptide is Glycerol-3-phosphate acyltransferase (Methylobacillus flagellatus (strain ATCC 51484 / DSM 6875 / VKM B-1610 / KT)).